A 305-amino-acid polypeptide reads, in one-letter code: Carbonic anhydrase 5A, mitochondrial (305 aa).

The transit peptide at 1-38 directs the protein to the mitochondrion; it reads MLGRNTWKTSAFSFLVEQMWAPLWSRSMRPGRWCSQRS. An Alpha-carbonic anhydrase domain is found at 39 to 296; that stretch reads CAWQTSNNTL…LMNRKVWASF (258 aa). 3 residues coordinate Zn(2+): H130, H132, and H155.

It belongs to the alpha-carbonic anhydrase family. The cofactor is Zn(2+).

It is found in the mitochondrion. The enzyme catalyses hydrogencarbonate + H(+) = CO2 + H2O. Activated by L- and D-histidine. Activated by L- and D-phenylalanine. Activated by L-adrenaline. Inhibited by coumarins, sulfonamide derivatives such as acetazolamide and Foscarnet (phosphonoformate trisodium salt). Activated by histamine. In terms of biological role, mitochondrial carbonic anhydrase that catalyzes the reversible conversion of carbon dioxide to bicarbonate/HCO3. Mitochondria are impermeable to HCO3, and thus this intramitochondrial carbonic anhydrase is pivotal in providing HCO3 for multiple mitochondrial enzymes that catalyze the formation of essential metabolites of intermediary metabolism in the urea and Krebs cycles. This is Carbonic anhydrase 5A, mitochondrial from Homo sapiens (Human).